The primary structure comprises 105 residues: Putative membrane protein insertion efficiency factor (105 aa).

It belongs to the UPF0161 family.

It is found in the cell membrane. Functionally, could be involved in insertion of integral membrane proteins into the membrane. This is Putative membrane protein insertion efficiency factor from Bifidobacterium longum subsp. infantis (strain ATCC 15697 / DSM 20088 / JCM 1222 / NCTC 11817 / S12).